We begin with the raw amino-acid sequence, 320 residues long: Taste receptor type 2 member 109 (320 aa).

Topologically, residues 1 to 14 (MEHFLKSIFDISKN) are extracellular. A helical membrane pass occupies residues 15-35 (VLPIILFIELIIGIIGNGFMA). Over 36–62 (LVHCMDWVKRKKMSLVNQILTTLATSR) the chain is Cytoplasmic. The chain crosses the membrane as a helical span at residues 63-83 (ICLLWFMLLGLLITLLDPDLA). Over 84 to 94 (SARMMIQVASN) the chain is Extracellular. Residues 95–115 (LWIIANHMSIWLATCLTVFYF) form a helical membrane-spanning segment. Over 116 to 135 (LKIANFSSSLFLYLKWRVEK) the chain is Cytoplasmic. The helical transmembrane segment at 136–156 (VISVIFLVSLVLLFLNMLLMN) threads the bilayer. Residues 157–191 (LENDMCIAEYHQINISYSFIYHYRADCERRVLRLH) are Extracellular-facing. The N-linked (GlcNAc...) asparagine glycan is linked to N170. A helical membrane pass occupies residues 192–212 (IIILSVPFVLSLPTFLLLIFS). Topologically, residues 213-240 (LWTHHKKMQQHVQGRRDASTTAHFKALQ) are cytoplasmic. A helical transmembrane segment spans residues 241-261 (TVIAFLLLYCIFILSMLLQFW). Topologically, residues 262 to 270 (KYELMKKPL) are extracellular. A helical transmembrane segment spans residues 271 to 291 (FILFCHIVYGAFPSFHSYVLI). The Cytoplasmic portion of the chain corresponds to 292-320 (LGDMKLRQASLSVLLWLKCRPNYIETLDL).

It belongs to the G-protein coupled receptor T2R family.

It localises to the membrane. Putative taste receptor which may play a role in the perception of bitterness. In Rattus norvegicus (Rat), this protein is Taste receptor type 2 member 109.